Consider the following 651-residue polypeptide: Mitochondrial sodium/calcium exchanger protein (651 aa).

Residues Val-51–Ile-71 form a helical membrane-spanning segment. The Cytoplasmic portion of the chain corresponds to Ala-72–Glu-91. The helical transmembrane segment at Ser-92–Ile-112 threads the bilayer. Over Ser-113–Ala-126 the chain is Extracellular. A helical membrane pass occupies residues Leu-127–Phe-147. The Cytoplasmic segment spans residues Thr-148 to Asp-161. A helical transmembrane segment spans residues Leu-162–Ile-182. Position 183 (Glu-183) is a topological domain, extracellular. Residues Val-184–Leu-204 traverse the membrane as a helical segment. Over Gly-205–Asn-398 the chain is Cytoplasmic. The chain crosses the membrane as a helical span at residues Ile-399–Val-419. The Extracellular segment spans residues Pro-420–Lys-428. The helical transmembrane segment at Pro-429–Ile-449 threads the bilayer. Residues Thr-450–Pro-458 are Cytoplasmic-facing. The helical transmembrane segment at Gly-459–Leu-479 threads the bilayer. At Pro-480–Lys-486 the chain is on the extracellular side. A helical membrane pass occupies residues Tyr-487 to Thr-507. The Cytoplasmic segment spans residues Ser-508–Glu-510. The helical transmembrane segment at Ile-511–Leu-531 threads the bilayer. Residues Thr-532 to Met-559 are Extracellular-facing. The chain crosses the membrane as a helical span at residues Ala-560–Ile-580. Topologically, residues Ala-581 to Val-595 are cytoplasmic. A helical transmembrane segment spans residues Tyr-596–Ile-616. Residues Gln-617–Ala-626 are Extracellular-facing. A helical transmembrane segment spans residues Val-627–Val-647. The Cytoplasmic segment spans residues Leu-648–Asn-651.

The protein belongs to the Ca(2+):cation antiporter (CaCA) (TC 2.A.19) family. SLC24A subfamily. Expressed in the seam cells of the organism. Expression is visible in the seam cells across all larval stages, and expression persists into the adult stage of the organism.

It is found in the mitochondrion inner membrane. With respect to regulation, inhibited by the sodium/calcium exchanger inhibitor CGP-37157. In terms of biological role, mitochondrial sodium/calcium antiporter that mediates sodium-dependent calcium efflux from mitochondrion, thereby acting as a key regulator of mitochondrion calcium homeostasis. Required for patterning of neural circuits: functions in the same pathway as RAC-dependent effectors of the unc-6/netrin signaling pathway to set left/ right patterning of the VD/DD GABAergic circuit. This is Mitochondrial sodium/calcium exchanger protein from Caenorhabditis elegans.